Consider the following 1462-residue polypeptide: DNA polymerase alpha catalytic subunit (1462 aa).

Disordered stretches follow at residues 1-33 (MAPV…GRQE) and 98-123 (DLED…KRNV). Basic residues predominate over residues 20-29 (RARREKKSKK). The segment covering 106-116 (ADEKGKDGKAR) has biased composition (basic and acidic residues). Thr-174 is modified (phosphothreonine). 3 positions are modified to phosphoserine: Ser-186, Ser-190, and Ser-209. The residue at position 224 (Lys-224) is an N6-acetyllysine. The segment at 232 to 251 (DVQVESTEEEQESGAMEFED) is disordered. Phosphothreonine is present on Thr-406. Positions 650 to 715 (RINVCKAPHW…YHLSELVQQI (66 aa)) are DNA-binding. At Lys-970 the chain carries N6-succinyllysine. Residues 1245 to 1376 (QFRVHHYHKD…TGPLCPACMK (132 aa)) form a DNA-binding region. Zn(2+)-binding residues include Cys-1283, Cys-1286, Cys-1310, Cys-1315, Cys-1348, Cys-1353, Cys-1371, and Cys-1374. The CysA-type zinc-finger motif lies at 1283–1318 (CPTCGTENIYDNVFDGSGTDMEPSLYRCSNIDCKAS). The CysB motif signature appears at 1348–1374 (CEEPTCRNRTRHLPLQFSRTGPLCPAC).

It belongs to the DNA polymerase type-B family. As to quaternary structure, component of the alpha DNA polymerase complex (also known as the alpha DNA polymerase-primase complex) consisting of four subunits: the catalytic subunit POLA1, the regulatory subunit POLA2, and the primase complex subunits PRIM1 and PRIM2 respectively. Interacts with PARP1; this interaction functions as part of the control of replication fork progression. Interacts with MCM10 and WDHD1; these interactions recruit the polymerase alpha complex to the pre-replicative complex bound to DNA. Interacts with RPA1; this interaction stabilizes the replicative complex and reduces the misincorporation rate of DNA polymerase alpha by acting as a fidelity clamp. (Microbial infection) Interacts with SV40 Large T antigen; this interaction allows viral DNA replication. In terms of assembly, (Microbial infection) Interacts with herpes simplex virus 1/HHV-1 replication origin-binding protein UL9. A 165 kDa form is probably produced by proteolytic cleavage at Lys-124.

It localises to the nucleus. The protein resides in the cytoplasm. Its subcellular location is the cytosol. The enzyme catalyses DNA(n) + a 2'-deoxyribonucleoside 5'-triphosphate = DNA(n+1) + diphosphate. Autoinhibited in apo-primosome, where the zinc motif of POLA1 and oligonucleotide/olicosaccharide-binding domain of POLA2 are placed into the active site blocking RNA:DNA duplex entry. Catalytic subunit of the DNA polymerase alpha complex (also known as the alpha DNA polymerase-primase complex) which plays an essential role in the initiation of DNA synthesis. During the S phase of the cell cycle, the DNA polymerase alpha complex (composed of a catalytic subunit POLA1, a regulatory subunit POLA2 and two primase subunits PRIM1 and PRIM2) is recruited to DNA at the replicative forks via direct interactions with MCM10 and WDHD1. The primase subunit of the polymerase alpha complex initiates DNA synthesis by oligomerising short RNA primers on both leading and lagging strands. These primers are initially extended by the polymerase alpha catalytic subunit and subsequently transferred to polymerase delta and polymerase epsilon for processive synthesis on the lagging and leading strand, respectively. The reason this transfer occurs is because the polymerase alpha has limited processivity and lacks intrinsic 3' exonuclease activity for proofreading error, and therefore is not well suited for replicating long complexes. In the cytosol, responsible for a substantial proportion of the physiological concentration of cytosolic RNA:DNA hybrids, which are necessary to prevent spontaneous activation of type I interferon responses. The protein is DNA polymerase alpha catalytic subunit (POLA1) of Homo sapiens (Human).